Consider the following 628-residue polypeptide: Leucine-rich repeat and fibronectin type-III domain-containing protein 3 (628 aa).

An N-terminal signal peptide occupies residues 1–16 (MAILPLLLCLLPLAPA). Over 17-539 (SSPPQSATPS…PHAPFLGGTM (523 aa)) the chain is Extracellular. Positions 19–59 (PPQSATPSPCPRRCRCQTQSLPLSVLCPGAGLLFVPPSLDR) constitute an LRRNT domain. 7 LRR repeats span residues 60 to 83 (RAAE…ANMT), 84 to 105 (GLLH…AFAD), 108 to 129 (ALRA…QLRG), 132 to 153 (NLRH…ALDD), 157 to 178 (TLED…ALGR), 181 to 202 (NVNT…AFSR), and 205 to 226 (KLAR…PLFS). An N-linked (GlcNAc...) asparagine glycan is attached at Asn81. Residues 249–295 (NPLHCNCELVWLRRLAREDDLEACASPPALGGRYFWAVGEEEFVCEP) form the LRRCT domain. The Ig-like domain maps to 295–382 (PPVVTHRSPP…GEATAAVELT (88 aa)). Cysteines 317 and 366 form a disulfide. N-linked (GlcNAc...) asparagine glycosylation is found at Asn339, Asn348, and Asn393. Residues 382 to 430 (TVGPPPPPQLANSTSCDPPRDGDPDALTPPSAASASAKVADTGPPTDRG) are disordered. Residues 406–422 (DALTPPSAASASAKVAD) show a composition bias toward low complexity. A Fibronectin type-III domain is found at 425 to 523 (PPTDRGVQVT…GCARFSTEPA (99 aa)). N-linked (GlcNAc...) asparagine glycosylation is present at Asn462. The helical transmembrane segment at 540–560 (IIALGGVIVASVLVFIFVLLM) threads the bilayer. Residues 561–628 (RYKVHGGQPP…WGPGHEPVGP (68 aa)) are Cytoplasmic-facing.

The protein belongs to the LRFN family. As to quaternary structure, can form heteromeric complexes with LRFN1, LRFN2, LRFN4 and LRFN5. Able to form homomeric complexes across cell junctions, between adjacent cells. Does not interact with DLG4. N-glycosylated.

It localises to the cell membrane. Its subcellular location is the cell projection. The protein resides in the axon. It is found in the dendrite. The protein localises to the synapse. It localises to the presynaptic cell membrane. Its subcellular location is the postsynaptic cell membrane. In terms of biological role, cell adhesion molecule that mediates homophilic cell-cell adhesion in a Ca(2+)-independent manner. Promotes neurite outgrowth in hippocampal neurons. The chain is Leucine-rich repeat and fibronectin type-III domain-containing protein 3 (LRFN3) from Homo sapiens (Human).